A 256-amino-acid chain; its full sequence is Homeobox-leucine zipper protein HOX18 (256 aa).

A disordered region spans residues 52-116; the sequence is YDHGRDEEQA…GGGGGGTRKK (65 aa). Residues 102 to 112 are compositionally biased toward gly residues; the sequence is DGGSGGGGGGG. A DNA-binding region (homeobox) is located at residues 112 to 171; it reads GTRKKLQLTKEQSTLLEDSFRVHNILSHAQKHELARQLKLKPRQVEVWFQNRRARTKLKQ. A leucine-zipper region spans residues 170–214; the sequence is KQTEVDCEFLKRCCESLTEENKQLKHELMELRRLASPAAAAAGSQ.

It belongs to the HD-ZIP homeobox family. Class II subfamily. Expressed in roots, leaf sheaths and blades and panicles.

Its subcellular location is the nucleus. Probable transcription factor. The sequence is that of Homeobox-leucine zipper protein HOX18 (HOX18) from Oryza sativa subsp. japonica (Rice).